The following is a 315-amino-acid chain: MKTMEIKKLLRKIDEFKIITLPAIFVVFILFVLILGFYFFNALPAIERYGIDLFITNVWKAAEEPAKEVYGLAAPIWGSIYTATIAVLIALPLSICYAIFVNDYAPKRLKYPLIVISDIMAGLPTIIYGIWGAFILVPLLRDHIMKFLYEHFSFIPLFDYPPLSGYCYLSAGILLGIMVTPFAAAIIREAYAMIPSVYKEGLVALGATRYETTKVLIKYIRPAIISGLILAFGRALGETVAVSLVIGNSFNLTYKLFAPGYTISSLIANQFGNAVLYEYMTSVLYSAGLVLFVIGLVVNIIGIYYLKRWREHVSH.

The next 6 membrane-spanning stretches (helical) occupy residues 18-38, 80-100, 119-139, 167-187, 227-247, and 283-303; these read IITL…LGFY, IYTA…YAIF, IMAG…LVPL, CYLS…AAII, GLIL…LVIG, and VLYS…IIGI. In terms of domain architecture, ABC transmembrane type-1 spans 76–302; the sequence is IWGSIYTATI…VIGLVVNIIG (227 aa).

The protein belongs to the binding-protein-dependent transport system permease family. CysTW subfamily.

The protein resides in the cell membrane. Functionally, part of the binding-protein-dependent transport system for phosphate; probably responsible for the translocation of the substrate across the membrane. The polypeptide is Probable phosphate transport system permease protein PstC (pstC) (Methanocaldococcus jannaschii (strain ATCC 43067 / DSM 2661 / JAL-1 / JCM 10045 / NBRC 100440) (Methanococcus jannaschii)).